Reading from the N-terminus, the 116-residue chain is UPF0342 protein LBA1592 (116 aa).

It belongs to the UPF0342 family.

This Lactobacillus acidophilus (strain ATCC 700396 / NCK56 / N2 / NCFM) protein is UPF0342 protein LBA1592.